We begin with the raw amino-acid sequence, 470 residues long: E3 ubiquitin-protein ligase TRIM21 (470 aa).

An RING-type zinc finger spans residues 20 to 59 (CSICLDPMVEPMSIECGHCFCKECIFEVGKNGGSSCPECR). Zn(2+) contacts are provided by Cys-96, His-99, Cys-118, and His-124. The segment at 96–127 (CMKHGEKLHLFCEEDGQALCWVCAQSGKHRDH) adopts a B box-type zinc-finger fold. The stretch at 188-250 (LQNSLLAQEE…RGSELELLQE (63 aa)) forms a coiled coil. The B30.2/SPRY domain maps to 272-470 (DLTSTCPVPG…APLKLCPLKM (199 aa)).

It belongs to the TRIM/RBCC family. As to quaternary structure, homotrimer. Component of a SCF(SKP2)-like complex containing CUL1, SKP1, TRIM21 and SKP2. Interacts with CALR, CUL1, FBXW11, HSPA5, IKBKB, IRF3, SKP1 and VCP. Interacts with SKP2; the interaction with SKP2 does not depend on an intact F-box domain. Interacts (via N-terminus and C-terminus) with DCP2 (via N-terminus and C-terminus). Interacts (via C-terminus) with IRF8 (via C-terminus). Interacts with ULK1, BECN1 and with ATG8 family members, including GABARAP, GABARAPL1, GABARAPL2 and MAP1LC3C/LC3C. Interacts with TRIM21 and SQSTM1/sequestosome 1. Interacts with IRF3. Interacts (via the SPRY domain) with NMI (via coiled-coil domain); the interaction promotes 'Lys-63'-linked ubiquitination of NMI. Interacts with IFI35 and NMI; the interaction facilitates NMI-IFI35 complex formation. Autoubiquitinated; does not lead to its proteasomal degradation. Deubiquitinated by USP4; leading to its stabilization. Autoubiquitinated.

The protein resides in the cytoplasm. It localises to the cytoplasmic vesicle. It is found in the autophagosome. Its subcellular location is the nucleus. The protein localises to the P-body. The protein resides in the stress granule. The enzyme catalyses S-ubiquitinyl-[E2 ubiquitin-conjugating enzyme]-L-cysteine + [acceptor protein]-L-lysine = [E2 ubiquitin-conjugating enzyme]-L-cysteine + N(6)-ubiquitinyl-[acceptor protein]-L-lysine.. Its pathway is protein modification; protein ubiquitination. In terms of biological role, E3 ubiquitin-protein ligase whose activity is dependent on E2 enzymes, UBE2D1, UBE2D2, UBE2E1 and UBE2E2. Forms a ubiquitin ligase complex in cooperation with the E2 UBE2D2 that is used not only for the ubiquitination of USP4 and IKBKB but also for its self-ubiquitination. Component of cullin-RING-based SCF (SKP1-CUL1-F-box protein) E3 ubiquitin-protein ligase complexes such as SCF(SKP2)-like complexes. A TRIM21-containing SCF(SKP2)-like complex is shown to mediate ubiquitination of CDKN1B ('Thr-187' phosphorylated-form), thereby promoting its degradation by the proteasome. Monoubiquitinates IKBKB that will negatively regulates Tax-induced NF-kappa-B signaling. Negatively regulates IFN-beta production post-pathogen recognition by catalyzing polyubiquitin-mediated degradation of IRF3. Mediates the ubiquitin-mediated proteasomal degradation of IgG1 heavy chain, which is linked to the VCP-mediated ER-associated degradation (ERAD) pathway. Promotes IRF8 ubiquitination, which enhanced the ability of IRF8 to stimulate cytokine genes transcription in macrophages. Plays a role in the regulation of the cell cycle progression. Enhances the decapping activity of DCP2. Exists as a ribonucleoprotein particle present in all mammalian cells studied and composed of a single polypeptide and one of four small RNA molecules. At least two isoforms are present in nucleated and red blood cells, and tissue specific differences in RO/SSA proteins have been identified. The common feature of these proteins is their ability to bind HY RNAs.2. Involved in the regulation of innate immunity and the inflammatory response in response to IFNG/IFN-gamma. Organizes autophagic machinery by serving as a platform for the assembly of ULK1, Beclin 1/BECN1 and ATG8 family members and recognizes specific autophagy targets, thus coordinating target recognition with assembly of the autophagic apparatus and initiation of autophagy. Also regulates autophagy through FIP200/RB1CC1 ubiquitination and subsequent decreased protein stability. Represses the innate antiviral response by facilitating the formation of the NMI-IFI35 complex through 'Lys-63'-linked ubiquitination of NMI. During viral infection, promotes cell pyroptosis by mediating 'Lys-6'-linked ubiquitination of ISG12a/IFI27, facilitating its translocation into the mitochondria and subsequent CASP3 activation. When up-regulated through the IFN/JAK/STAT signaling pathway, promotes 'Lys-27'-linked ubiquitination of MAVS, leading to the recruitment of TBK1 and up-regulation of innate immunity. Mediates 'Lys-63'-linked polyubiquitination of G3BP1 in response to heat shock, leading to stress granule disassembly. The chain is E3 ubiquitin-protein ligase TRIM21 (Trim21) from Mus musculus (Mouse).